Here is a 144-residue protein sequence, read N- to C-terminus: MLVPKRVKHRREFRGKMRGEAKGGKEVAFGEWGLQATESHWITNRQIEAARIAMTRYMKRGGKVWIKIFPHKSYTSKAIGVRMGKGKGAPEGWVSPVKRGKIMFEIAGVPEEVAREALRLASHKLPVKTKIVKREEMGGESNEG.

It belongs to the universal ribosomal protein uL16 family. As to quaternary structure, part of the 50S ribosomal subunit.

Binds 23S rRNA and is also seen to make contacts with the A and possibly P site tRNAs. The protein is Large ribosomal subunit protein uL16 of Enterococcus faecalis (strain ATCC 700802 / V583).